A 556-amino-acid chain; its full sequence is 2-isopropylmalate synthase (556 aa).

The 275-residue stretch at 33–307 (PIWCSSDLRD…DPELDFSDID (275 aa)) folds into the Pyruvate carboxyltransferase domain. Residues Asp42, His246, His248, and Asn282 each contribute to the Mg(2+) site. A regulatory domain region spans residues 439-556 (ANTPYALISH…SLSQTQAKAA (118 aa)).

This sequence belongs to the alpha-IPM synthase/homocitrate synthase family. LeuA type 2 subfamily. Homodimer. Mg(2+) is required as a cofactor.

The protein resides in the cytoplasm. It carries out the reaction 3-methyl-2-oxobutanoate + acetyl-CoA + H2O = (2S)-2-isopropylmalate + CoA + H(+). Its pathway is amino-acid biosynthesis; L-leucine biosynthesis; L-leucine from 3-methyl-2-oxobutanoate: step 1/4. Functionally, catalyzes the condensation of the acetyl group of acetyl-CoA with 3-methyl-2-oxobutanoate (2-ketoisovalerate) to form 3-carboxy-3-hydroxy-4-methylpentanoate (2-isopropylmalate). In Pseudomonas savastanoi pv. phaseolicola (strain 1448A / Race 6) (Pseudomonas syringae pv. phaseolicola (strain 1448A / Race 6)), this protein is 2-isopropylmalate synthase.